Here is a 246-residue protein sequence, read N- to C-terminus: Chalcone--flavanone isomerase 1 (246 aa).

3 residues coordinate substrate: threonine 59, asparagine 124, and serine 201.

The protein belongs to the chalcone isomerase family. Mostly expressed in siliques and flowers, and, to a lower extent, in leaves.

The enzyme catalyses a chalcone = a flavanone.. It participates in secondary metabolite biosynthesis; flavonoid biosynthesis. Functionally, catalyzes the intramolecular cyclization of bicyclic chalcones into tricyclic (S)-flavanones. Responsible for the isomerization of 4,2',4',6'-tetrahydroxychalcone (also termed chalcone) into naringenin. In Arabidopsis thaliana (Mouse-ear cress), this protein is Chalcone--flavanone isomerase 1 (CHI1).